Consider the following 405-residue polypeptide: Phosphoglycerate kinase (405 aa).

Residues 24 to 26 (DFN), Arg-40, 63 to 66 (HLGR), Arg-122, and Arg-162 contribute to the substrate site. ATP-binding positions include Lys-212, Glu-331, and 361-364 (GGDS).

This sequence belongs to the phosphoglycerate kinase family. As to quaternary structure, monomer.

It is found in the cytoplasm. It carries out the reaction (2R)-3-phosphoglycerate + ATP = (2R)-3-phospho-glyceroyl phosphate + ADP. It functions in the pathway carbohydrate degradation; glycolysis; pyruvate from D-glyceraldehyde 3-phosphate: step 2/5. In Corynebacterium efficiens (strain DSM 44549 / YS-314 / AJ 12310 / JCM 11189 / NBRC 100395), this protein is Phosphoglycerate kinase.